A 512-amino-acid chain; its full sequence is Ribose import ATP-binding protein RbsA (512 aa).

2 ABC transporter domains span residues 6–242 (LELR…VNRE) and 252–496 (VPAG…TGAQ). Residue 38–45 (GENGAGKS) participates in ATP binding.

It belongs to the ABC transporter superfamily. Ribose importer (TC 3.A.1.2.1) family. In terms of assembly, the complex is composed of an ATP-binding protein (RbsA), two transmembrane proteins (RbsC) and a solute-binding protein (RbsB).

The protein resides in the cell inner membrane. The catalysed reaction is D-ribose(out) + ATP + H2O = D-ribose(in) + ADP + phosphate + H(+). Its function is as follows. Part of the ABC transporter complex RbsABC involved in ribose import. Responsible for energy coupling to the transport system. The chain is Ribose import ATP-binding protein RbsA from Pseudomonas putida (strain ATCC 47054 / DSM 6125 / CFBP 8728 / NCIMB 11950 / KT2440).